Here is a 740-residue protein sequence, read N- to C-terminus: Phosphoribosylformylglycinamidine synthase subunit PurL (740 aa).

The active site involves H50. ATP contacts are provided by Y53 and K92. A Mg(2+)-binding site is contributed by E94. Substrate contacts are provided by residues 95 to 98 (SHNH) and R117. H96 acts as the Proton acceptor in catalysis. D118 is a binding site for Mg(2+). Q241 serves as a coordination point for substrate. D269 is a Mg(2+) binding site. A substrate-binding site is contributed by 313 to 315 (ESQ). D495 and G532 together coordinate ATP. Residue N533 coordinates Mg(2+). Residue S535 coordinates substrate.

The protein belongs to the FGAMS family. Monomer. Part of the FGAM synthase complex composed of 1 PurL, 1 PurQ and 2 PurS subunits.

It is found in the cytoplasm. The enzyme catalyses N(2)-formyl-N(1)-(5-phospho-beta-D-ribosyl)glycinamide + L-glutamine + ATP + H2O = 2-formamido-N(1)-(5-O-phospho-beta-D-ribosyl)acetamidine + L-glutamate + ADP + phosphate + H(+). It functions in the pathway purine metabolism; IMP biosynthesis via de novo pathway; 5-amino-1-(5-phospho-D-ribosyl)imidazole from N(2)-formyl-N(1)-(5-phospho-D-ribosyl)glycinamide: step 1/2. Part of the phosphoribosylformylglycinamidine synthase complex involved in the purines biosynthetic pathway. Catalyzes the ATP-dependent conversion of formylglycinamide ribonucleotide (FGAR) and glutamine to yield formylglycinamidine ribonucleotide (FGAM) and glutamate. The FGAM synthase complex is composed of three subunits. PurQ produces an ammonia molecule by converting glutamine to glutamate. PurL transfers the ammonia molecule to FGAR to form FGAM in an ATP-dependent manner. PurS interacts with PurQ and PurL and is thought to assist in the transfer of the ammonia molecule from PurQ to PurL. In Brucella abortus (strain S19), this protein is Phosphoribosylformylglycinamidine synthase subunit PurL.